A 401-amino-acid chain; its full sequence is Argininosuccinate synthase (401 aa).

ATP is bound at residue 9–17; it reads AYSGGLDTS. Y86 lines the L-citrulline pocket. An ATP-binding site is contributed by G116. The L-aspartate site is built by T118, N122, and D123. L-citrulline is bound at residue N122. R126, S174, S183, E259, and Y271 together coordinate L-citrulline.

Belongs to the argininosuccinate synthase family. Type 1 subfamily. Homotetramer.

It localises to the cytoplasm. The catalysed reaction is L-citrulline + L-aspartate + ATP = 2-(N(omega)-L-arginino)succinate + AMP + diphosphate + H(+). The protein operates within amino-acid biosynthesis; L-arginine biosynthesis; L-arginine from L-ornithine and carbamoyl phosphate: step 2/3. This Bacillus thuringiensis (strain Al Hakam) protein is Argininosuccinate synthase.